The sequence spans 202 residues: Ras-related protein RIC1 (202 aa).

GTP contacts are provided by residues 15–23 (GDSGVGKSC), 33–40 (YLESYIST), 63–67 (DTAGQ), 121–124 (NKCD), and 151–153 (SAK). An Effector region motif is present at residues 37 to 45 (YISTIGVDF). The segment covering 174 to 185 (ASQPATNASKPA) has biased composition (polar residues). A disordered region spans residues 174–202 (ASQPATNASKPATVQMRGQPVAQQSSCCS). Residues Cys200 and Cys201 are each lipidated (S-geranylgeranyl cysteine).

Belongs to the small GTPase superfamily. Rab family.

Its subcellular location is the cell membrane. In terms of biological role, possesses GTPase activity. The protein is Ras-related protein RIC1 (RIC1) of Oryza sativa subsp. japonica (Rice).